The primary structure comprises 344 residues: Protein RecA (344 aa).

64–71 (GPESSGKT) contacts ATP.

Belongs to the RecA family.

The protein localises to the cytoplasm. Can catalyze the hydrolysis of ATP in the presence of single-stranded DNA, the ATP-dependent uptake of single-stranded DNA by duplex DNA, and the ATP-dependent hybridization of homologous single-stranded DNAs. It interacts with LexA causing its activation and leading to its autocatalytic cleavage. In Paramagnetospirillum magnetotacticum (Aquaspirillum magnetotacticum), this protein is Protein RecA.